The sequence spans 132 residues: Fluoride-specific ion channel FluC 1 (132 aa).

Helical transmembrane passes span 11 to 31 (AVFA…ALAI), 37 to 57 (WPWP…YFTT), 70 to 92 (RPLL…VETI), and 105 to 125 (AYSV…TVLV). Positions 79 and 82 each coordinate Na(+).

This sequence belongs to the fluoride channel Fluc/FEX (TC 1.A.43) family.

The protein resides in the cell membrane. The enzyme catalyses fluoride(in) = fluoride(out). Na(+) is not transported, but it plays an essential structural role and its presence is essential for fluoride channel function. Its function is as follows. Fluoride-specific ion channel. Important for reducing fluoride concentration in the cell, thus reducing its toxicity. The sequence is that of Fluoride-specific ion channel FluC 1 from Mycobacterium bovis (strain ATCC BAA-935 / AF2122/97).